An 818-amino-acid chain; its full sequence is Dipeptidyl-peptidase 7 (818 aa).

A signal peptide spans methionine 1 to alanine 22. Residues histidine 87, aspartate 223, and serine 645 each act as charge relay system in the active site.

It belongs to the peptidase S46 family.

Functionally, catalyzes the removal of dipeptides from the N-terminus of oligopeptides. Most efficiently cleaves the synthetic substrate Met-Leu-methylcoumaryl-7-amide (Met-Leu-MCA), and slowly hydrolyzes Leu-Gln-, Lys-Ala-, Leu-Arg, and Ala-Asn-MCA. Is likely involved in amino acid metabolism and bacterial growth/survival of asaccharolytic P.endodontalis, that utilizes amino acids from extracellular proteinaceous nutrients as energy and carbon sources. The sequence is that of Dipeptidyl-peptidase 7 from Porphyromonas endodontalis (strain ATCC 35406 / DSM 24491 / JCM 8526 / CCUG 16442 / BCRC 14492 / NCTC 13058 / HG 370) (Bacteroides endodontalis).